The sequence spans 231 residues: Protein usf (231 aa).

This Aquifex pyrophilus protein is Protein usf (usf).